We begin with the raw amino-acid sequence, 158 residues long: Tryptophan-rich protein TspO (158 aa).

5 consecutive transmembrane segments (helical) span residues isoleucine 5–phenylalanine 25, leucine 48–leucine 68, valine 79–phenylalanine 99, leucine 105–phenylalanine 125, and leucine 134–leucine 154.

It belongs to the TspO/BZRP family.

The protein localises to the membrane. Its subcellular location is the cell membrane. Its function is as follows. Binds tetrapyrroles and promotes the photooxidative degradation of protoporphyrin IX. Can bind the benzodiazepine receptor agonist PK-11195 (in vitro); this interferes with photooxidative tetrapyrrole degradation. May play a role in the transmembrane transport of tetrapyrroles and similar compounds. The chain is Tryptophan-rich protein TspO from Chlorobaculum tepidum (strain ATCC 49652 / DSM 12025 / NBRC 103806 / TLS) (Chlorobium tepidum).